The primary structure comprises 121 residues: Methylglyoxal synthase (121 aa).

Residues 1–121 enclose the MGS-like domain; the sequence is MMKVALIAHD…SAELFLRALN (121 aa). Substrate is bound by residues His-9, Lys-13, 35–38, and 55–56; these read TGTT and SG. The active-site Proton donor/acceptor is Asp-61. His-88 is a substrate binding site.

This sequence belongs to the methylglyoxal synthase family.

The enzyme catalyses dihydroxyacetone phosphate = methylglyoxal + phosphate. In terms of biological role, catalyzes the formation of methylglyoxal from dihydroxyacetone phosphate. This chain is Methylglyoxal synthase, found in Carboxydothermus hydrogenoformans (strain ATCC BAA-161 / DSM 6008 / Z-2901).